The following is a 493-amino-acid chain: Neisserial heparin binding antigen (493 aa).

The signal sequence occupies residues 1–22 (MKEMMMFKRSVIAMACIFALSA). The N-palmitoyl cysteine moiety is linked to residue C23. C23 is lipidated: S-diacylglycerol cysteine. Residues 27 to 206 (GGGSPDVKSA…NPAPANGGSN (180 aa)) form a disordered region. The span at 48-58 (SEKETEAKEDA) shows a compositional bias: basic and acidic residues. The segment covering 59 to 75 (PQAGSQGQGAPSAQGSQ) has biased composition (low complexity). Composition is skewed to polar residues over residues 106 to 123 (DMPQ…NHTP) and 132 to 147 (MENQ…QPAN). A compositionally biased stretch (low complexity) spans 165–188 (AGGQNAGNTAAQGANQAGNNQAAG). The Arg-rich motif motif lies at 301 to 311 (RFRRSARSRRS).

Belongs to the NHBA family. As to quaternary structure, the C-terminal beta-barrel forms a monomer. In terms of processing, cleaved in vivo by the Neisserial phase-variable autotransporter/serine protease NalP to give 2 fragments. The N-terminus remains in the cell outer membrane while the C-terminus (beginning on Ser-298) is soluble; this soluble fragment is called C2. Cleaved in vitro by human lactoferrin (LTF, between Arg-310 and Ser-311), this fragment is called C1. Recombinant and cell surface protein is cleaved by human saliva kallikrein (KLK1) between Ser-308 and Arg-309; in saliva kallikrein is more active on NHBA than lactoferrin. Human plasma kallikrein (KLKB1) cleaves in a similar manner to KLK1.

It localises to the cell outer membrane. In terms of biological role, a major human immunogenic protein detected in patients recovering from meningitidis, where it induces bactericidal antibodies. Binds human cells, heparin and heparan sulfate proteoglycan in vitro via the Arg-rich motif. Heparin-binding to this protein protects bacteria against killing by bactericidal antibodies (serum killing). The bacteria binds a number of human extracellular sialyated and/or sulfated glycans via this protein, including chondroitin sulfate, heparin and ganglioside GT3. Whole protein binds DNA. Its function is as follows. Plays a role in extracellular-DNA (eDNA) mediated biofilm formation. In some strains (including cc32 strain H44/76 but not cc11 strain B16B6) eDNA stimulates biofilm formation. When NHBA is not processed by NalP, biofilm formation increases. This is probably because the number of positively charged, NHBA- and IgA-derived DNA-binding peptides on the cell surface rises, resulting in increased DNA-binding peptides and increased biofilm formation. In Neisseria meningitidis serogroup B / serotype 15 (strain H44/76), this protein is Neisserial heparin binding antigen.